Consider the following 797-residue polypeptide: Ent-atiserene synthase KSL1, chloroplastic (797 aa).

A chloroplast-targeting transit peptide spans 1-48 (LVKDDMSLILSSFSLFRSSRSSPASASLAGSGHPRTTPPKIASLQSPM). Positions 21-32 (SSPASASLAGSG) are enriched in low complexity. The tract at residues 21–47 (SSPASASLAGSGHPRTTPPKIASLQSP) is disordered. The Mg(2+) site is built by Asp547, Asp551, Asn691, and Glu699. The DDXXD motif motif lies at 547–551 (DDLFD).

The protein belongs to the terpene synthase family. Mg(2+) is required as a cofactor.

The protein localises to the plastid. It localises to the chloroplast. The enzyme catalyses ent-copalyl diphosphate = ent-atiserene + diphosphate. It participates in secondary metabolite biosynthesis; terpenoid biosynthesis. Involved in the biosynthesis of ent-kaurene diterpenoids natural products such as oridonin, miltiradiene, eriocalyxin B and nezukol, known to exhibit antitumor, anti-inflammatory and antibacterial activities. Catalyzes the conversion of ent-copalyl diphosphate (ent-CPP) to ent-atiserene. The chain is Ent-atiserene synthase KSL1, chloroplastic from Isodon japonicus (Scutellaria japonica).